The primary structure comprises 144 residues: Large ribosomal subunit protein uL15 (144 aa).

The interval 1–57 is disordered; the sequence is MKLNDLSPAPGSRREKHRPGRGIGSGLGKTGGRGHKGQTSRSGGSIAPGFEGGQQPL. A compositionally biased stretch (gly residues) spans 21–31; the sequence is RGIGSGLGKTG.

The protein belongs to the universal ribosomal protein uL15 family. Part of the 50S ribosomal subunit.

Its function is as follows. Binds to the 23S rRNA. The chain is Large ribosomal subunit protein uL15 from Pseudomonas entomophila (strain L48).